A 579-amino-acid polypeptide reads, in one-letter code: Leucine-rich repeat-containing protein 15 (579 aa).

Residues 1-21 (MPLKHYLLLLVSCQAWAAGLA) form the signal peptide. One can recognise an LRRNT domain in the interval 22-53 (YYGCPSECTCSRASQVECTGAQIVAMPSPLPW). The Extracellular segment spans residues 22 to 536 (YYGCPSECTC…TWGMTDAQSG (515 aa)). 15 LRR repeats span residues 54 to 75 (NAMS…KFLN), 78 to 99 (ALIA…AFRN), 102 to 123 (SLRH…LFQD), 126 to 147 (NLET…QFSQ), 150 to 171 (NLKE…VFDH), 174 to 195 (GLTK…VFQH), 198 to 219 (NLQV…TFDA), 222 to 243 (NLQE…LFHN), 246 to 267 (NLQR…IFMQ), 270 to 291 (HLNK…VFGP), 294 to 315 (NLRE…AFSH), 318 to 339 (QLQV…AFNG), 342 to 363 (NLRE…VFRS), 366 to 387 (NLRN…IFAN), and 390 to 411 (GLMT…IFDH). The N-linked (GlcNAc...) asparagine glycan is linked to Asn75. A glycan (N-linked (GlcNAc...) asparagine) is linked at Asn369. In terms of domain architecture, LRRCT spans 423-473 (NPWRCDSNILPLHDWLILNRARLGTDTLPVCSSPASVRGQSLVIINVNFPG). The interval 476–509 (VQGPETPEVSSYPDTSSYPDSTSISSTTEITRST) is disordered. Residues 485-506 (SSYPDTSSYPDSTSISSTTEIT) show a composition bias toward low complexity. A helical transmembrane segment spans residues 537–557 (LAIAAIVIGIIALACSLAACI). Residues 558–579 (CCCCCKKRSQAVLMQMKAPNEC) are Cytoplasmic-facing.

As to expression, expressed in chodrocytes (at protein level).

The protein localises to the cell membrane. The protein is Leucine-rich repeat-containing protein 15 (Lrrc15) of Mus musculus (Mouse).